The sequence spans 486 residues: Palmitoyltransferase pfa4 (486 aa).

Residues 1–15 are Cytoplasmic-facing; the sequence is MTNLQTGPTTRGLQR. The helical transmembrane segment at 16-36 threads the bilayer; the sequence is FAIPAVCGLIIFLGYYSQYLF. The Lumenal portion of the chain corresponds to 37–51; sequence NTSADLAPGPLTCRE. Residues 52–72 traverse the membrane as a helical segment; it reads SLIFNILLVCLWLTYYQACTV. Topologically, residues 73–146 are cytoplasmic; sequence DPGQYKFPPK…NCVSLQTFPH (74 aa). Basic and acidic residues predominate over residues 81–91; that stretch reads PKEKEDGDNNN. The segment at 81 to 101 is disordered; that stretch reads PKEKEDGDNNNKRGGRGPQKA. A DHHC domain is found at 102–152; that stretch reads KWCKKCDAPKPPRAHHCRHCARCIPRMDHHCPWTGNCVSLQTFPHFLRFLV. Cys132 acts as the S-palmitoyl cysteine intermediate in catalysis. A helical transmembrane segment spans residues 147 to 166; that stretch reads FLRFLVYTNAALVYFARLLW. Over 167-178 the chain is Lumenal; that stretch reads TRLYYGLWDQRH. Residues 179-201 form a helical membrane-spanning segment; the sequence is VPAYLGPSVGALLGCTMLSIAWF. At 202 to 486 the chain is on the cytoplasmic side; sequence ATQFALMVLL…RKVKSNGVHE (285 aa). Residues 314–420 form a disordered region; sequence NDRVGMWPPP…QDGRAWMNSE (107 aa). Basic and acidic residues-rich tracts occupy residues 324-333 and 346-376; these read DPEKLRRERA and LNTEKPEVDYYRSSEDMKTAFKRRQQEDLRR. Positions 386–399 are enriched in acidic residues; sequence EEDEIMAELEEDEG.

It belongs to the DHHC palmitoyltransferase family. PFA4 subfamily.

The protein resides in the endoplasmic reticulum membrane. The catalysed reaction is L-cysteinyl-[protein] + hexadecanoyl-CoA = S-hexadecanoyl-L-cysteinyl-[protein] + CoA. Its function is as follows. Mediates the reversible addition of palmitate to target proteins, thereby regulating their membrane association and biological function. This chain is Palmitoyltransferase pfa4, found in Neurospora crassa (strain ATCC 24698 / 74-OR23-1A / CBS 708.71 / DSM 1257 / FGSC 987).